The following is a 1046-amino-acid chain: UDP-N-acetylglucosamine--peptide N-acetylglucosaminyltransferase 110 kDa subunit (1046 aa).

A2 is subject to N-acetylalanine. Residues S3 and S4 each carry the phosphoserine; by GSK3-beta; alternate modification. O-linked (GlcNAc) serine; alternate glycosylation is found at S3 and S4. S20 carries the phosphoserine modification. TPR repeat units follow at residues 21 to 54 (FQGLAELAHREYQAGDFEAAERHCMQLWRQEPDN), 89 to 122 (AEAYSNLGNVYKERGQLQEAIEHYRHALRLKPDF), 123 to 156 (IDGYINLAAALVAAGDMEGAVQAYVSALQYNPDL), 157 to 190 (YCVRSDLGNLLKALGRLEEAKACYLKAIETQPNF), 191 to 224 (AVAWSNLGCVFNAQGEIWLAIHHFEKAVTLDPNF), 225 to 258 (LDAYINLGNVLKEARIFDRAVAAYLRALSLSPNH), 259 to 292 (AVVHGNLACVYYEQGLIDLAIDTYRRAIELQPHF), 293 to 326 (PDAYCNLANALKEKGSVAEAEDCYNTALRLCPTH), 327 to 360 (ADSLNNLANIKREQGNIEEAVRLYRKALEVFPEF), 361 to 394 (AAAHSNLASVLQQQGKLQEALMHYKEAIRISPTF), 395 to 428 (ADAYSNMGNTLKEMQDVQGALQCYTRAIQINPAF), and 429 to 462 (ADAHSNLASIHKDSGNIPEAIASYRTALKLKPDF). S399 is a glycosylation site (O-linked (GlcNAc) serine; by autocatalysis). Position 454 is a phosphothreonine (T454). The stretch at 463 to 473 (PDAYCNLAHCL) is one TPR 13; truncated repeat. The DFP motif signature appears at 464-466 (DAY). Positions 487–503 (KKLVSIVADQLEKNRLP) match the Nuclear localization signal motif. H508 functions as the Proton acceptor in the catalytic mechanism. UDP contacts are provided by residues Q849, K852, 906–908 (APK), 911–914 (HVRR), 930–932 (HTT), and D935. The residue at position 989 (Y989) is a Phosphotyrosine. The required for phosphatidylinositol 3,4,5-triphosphate binding stretch occupies residues 991 to 1010 (KKIRGKVWKQRISSPLFNTK).

Belongs to the glycosyltransferase 41 family. O-GlcNAc transferase subfamily. Monomer; may exist in different oligomerization states in cells. Homotrimer, oligomerizes via TPR repeats 6 and 7. Trimerization is not necessary for activity in vitro, however it increases affinity for UDP-GlcNAc. Component of a THAP1/THAP3-HCFC1-OGT complex. Component of the NSL complex at least composed of MOF/KAT8, KANSL1, KANSL2, KANSL3, MCRS1, PHF20, OGT1/OGT, WDR5 and HCFC1. Found in a complex with KIF5B, RHOT1, RHOT2 and TRAK1. Found in a complex composed of at least SINHCAF, SIN3A, HDAC1, SAP30, RBBP4, OGT and TET1. Component of a complex composed of KMT2E/MLL5, OGT and USP7; the complex stabilizes KMT2E/MLL5, preventing KMT2E/MLL5 ubiquitination and proteasomal-mediated degradation. Interacts (via TPRs 1-6) with SIN3A; the interaction mediates transcriptional repression in parallel with histone deacetylase. Interacts (via TPR 5-6) with TET1, TET2 and TET3. Interacts (via TPR repeats 6 and 7) with ATXN10. Interacts with NSD2. Interacts with PROSER1; this interaction mediates TET2 O-GlcNAcylation and stability by promoting the interaction between OGT and TET2. Ubiquitinated by the SCF(FBXO31) complex, leading to its proteasomal degradation. In terms of processing, phosphorylation on Ser-3 or Ser-4 by GSK3-beta positively regulates its activity. Phosphorylation at Thr-454 by AMPK promotes nuclear localization. Post-translationally, glycosylated via autocatalysis; O-GlcNAcylation at Ser-399 promotes nuclear localization.

Its subcellular location is the nucleus. The protein resides in the cytoplasm. It carries out the reaction L-seryl-[protein] + UDP-N-acetyl-alpha-D-glucosamine = 3-O-(N-acetyl-beta-D-glucosaminyl)-L-seryl-[protein] + UDP + H(+). The enzyme catalyses L-threonyl-[protein] + UDP-N-acetyl-alpha-D-glucosamine = 3-O-(N-acetyl-beta-D-glucosaminyl)-L-threonyl-[protein] + UDP + H(+). The protein operates within protein modification; protein glycosylation. Its activity is regulated as follows. Inhibited by UDP. Functionally, catalyzes the transfer of a single N-acetylglucosamine from UDP-GlcNAc to a serine or threonine residue in cytoplasmic and nuclear proteins resulting in their modification with a beta-linked N-acetylglucosamine (O-GlcNAc). Glycosylates a large and diverse number of proteins including histone H2B, AKT1, AMPK, ATG4B, CAPRIN1, EZH2, FNIP1, GSDMD, KRT7, LMNA, LMNB1, LMNB2, RPTOR, HOXA1, PFKL, KMT2E/MLL5, MAPT/TAU, TET2, RBL2, RET, NOD2 and HCFC1. Can regulate their cellular processes via cross-talk between glycosylation and phosphorylation or by affecting proteolytic processing. Involved in insulin resistance in muscle and adipocyte cells via glycosylating insulin signaling components and inhibiting the 'Thr-308' phosphorylation of AKT1, enhancing IRS1 phosphorylation and attenuating insulin signaling. Involved in glycolysis regulation by mediating glycosylation of 6-phosphofructokinase PFKL, inhibiting its activity. Plays a key role in chromatin structure by mediating O-GlcNAcylation of 'Ser-112' of histone H2B: recruited to CpG-rich transcription start sites of active genes via its interaction with TET proteins (TET1, TET2 or TET3). As part of the NSL complex indirectly involved in acetylation of nucleosomal histone H4 on several lysine residues. O-GlcNAcylation of 'Ser-75' of EZH2 increases its stability, and facilitating the formation of H3K27me3 by the PRC2/EED-EZH2 complex. Stabilizes KMT2E/MLL5 by mediating its glycosylation, thereby preventing KMT2E/MLL5 ubiquitination. Regulates circadian oscillation of the clock genes and glucose homeostasis in the liver. Stabilizes clock proteins BMAL1 and CLOCK through O-glycosylation, which prevents their ubiquitination and subsequent degradation. Promotes the CLOCK-BMAL1-mediated transcription of genes in the negative loop of the circadian clock such as PER1/2 and CRY1/2. O-glycosylates HCFC1 and regulates its proteolytic processing and transcriptional activity. Component of a THAP1/THAP3-HCFC1-OGT complex that is required for the regulation of the transcriptional activity of RRM1. Regulates mitochondrial motility in neurons by mediating glycosylation of TRAK1. Promotes autophagy by mediating O-glycosylation of ATG4B. Acts as a regulator of mTORC1 signaling by mediating O-glycosylation of RPTOR and FNIP1: O-GlcNAcylation of RPTOR in response to glucose sufficiency promotes activation of the mTORC1 complex. In terms of biological role, catalyzes the transfer of a single N-acetylglucosamine from UDP-GlcNAc to a serine or threonine residue. Acts on cytoplasmic and nuclear proteins resulting in their modification with a beta-linked N-acetylglucosamine (O-GlcNAc). Glycosylates a large and diverse number of proteins including histone H2B, AKT1, ATG4B, EZH2, PFKL, KMT2E/MLL5, MAPT/TAU, NOD2 and HCFC1. Can regulate their cellular processes via cross-talk between glycosylation and phosphorylation or by affecting proteolytic processing. Probably by glycosylating KMT2E/MLL5, stabilizes KMT2E/MLL5 by preventing its ubiquitination. Involved in insulin resistance in muscle and adipocyte cells via glycosylating insulin signaling components and inhibiting the 'Thr-308' phosphorylation of AKT1, enhancing IRS1 phosphorylation and attenuating insulin signaling. Involved in glycolysis regulation by mediating glycosylation of 6-phosphofructokinase PFKL, inhibiting its activity. Component of a THAP1/THAP3-HCFC1-OGT complex that is required for the regulation of the transcriptional activity of RRM1. Plays a key role in chromatin structure by mediating O-GlcNAcylation of 'Ser-112' of histone H2B: recruited to CpG-rich transcription start sites of active genes via its interaction with TET proteins (TET1, TET2 or TET3). As part of the NSL complex indirectly involved in acetylation of nucleosomal histone H4 on several lysine residues. O-GlcNAcylation of 'Ser-75' of EZH2 increases its stability, and facilitating the formation of H3K27me3 by the PRC2/EED-EZH2 complex. Regulates circadian oscillation of the clock genes and glucose homeostasis in the liver. Stabilizes clock proteins BMAL1 and CLOCK through O-glycosylation, which prevents their ubiquitination and subsequent degradation. Promotes the CLOCK-BMAL1-mediated transcription of genes in the negative loop of the circadian clock such as PER1/2 and CRY1/2. O-glycosylates HCFC1 and regulates its proteolytic processing and transcriptional activity. Regulates mitochondrial motility in neurons by mediating glycosylation of TRAK1. Glycosylates HOXA1. O-glycosylates FNIP1. Promotes autophagy by mediating O-glycosylation of ATG4B. In Oryctolagus cuniculus (Rabbit), this protein is UDP-N-acetylglucosamine--peptide N-acetylglucosaminyltransferase 110 kDa subunit (OGT).